We begin with the raw amino-acid sequence, 154 residues long: Large ribosomal subunit protein bL17 (154 aa).

A disordered region spans residues 127–154 (TAAKQDRAKRVKGSKKAETEKEGGESAE). Residues 141–154 (KKAETEKEGGESAE) are compositionally biased toward basic and acidic residues.

Belongs to the bacterial ribosomal protein bL17 family. In terms of assembly, part of the 50S ribosomal subunit. Contacts protein L32.

This Chlorobaculum parvum (strain DSM 263 / NCIMB 8327) (Chlorobium vibrioforme subsp. thiosulfatophilum) protein is Large ribosomal subunit protein bL17.